The following is a 32-amino-acid chain: ilv operon leader peptide (32 aa).

The protein is ilv operon leader peptide (ilvL) of Edwardsiella tarda.